A 290-amino-acid chain; its full sequence is Bifunctional protein FolD 3 (290 aa).

NADP(+) contacts are provided by residues 163-165 (GHS) and I229.

It belongs to the tetrahydrofolate dehydrogenase/cyclohydrolase family. As to quaternary structure, homodimer.

The catalysed reaction is (6R)-5,10-methylene-5,6,7,8-tetrahydrofolate + NADP(+) = (6R)-5,10-methenyltetrahydrofolate + NADPH. It catalyses the reaction (6R)-5,10-methenyltetrahydrofolate + H2O = (6R)-10-formyltetrahydrofolate + H(+). Its pathway is one-carbon metabolism; tetrahydrofolate interconversion. Functionally, catalyzes the oxidation of 5,10-methylenetetrahydrofolate to 5,10-methenyltetrahydrofolate and then the hydrolysis of 5,10-methenyltetrahydrofolate to 10-formyltetrahydrofolate. The protein is Bifunctional protein FolD 3 of Roseobacter denitrificans (strain ATCC 33942 / OCh 114) (Erythrobacter sp. (strain OCh 114)).